A 479-amino-acid chain; its full sequence is Cardiolipin synthase (479 aa).

The next 2 membrane-spanning stretches (helical) occupy residues 5 to 25 (SLLL…IIFL) and 34 to 54 (WAWV…YLIF). 2 consecutive PLD phosphodiesterase domains span residues 216-243 (INYR…GDEY) and 392-419 (QNGF…DVRS). Active-site residues include His-221, Lys-223, Asp-228, His-397, Lys-399, and Asp-404.

This sequence belongs to the phospholipase D family. Cardiolipin synthase subfamily.

Its subcellular location is the cell membrane. The enzyme catalyses 2 a 1,2-diacyl-sn-glycero-3-phospho-(1'-sn-glycerol) = a cardiolipin + glycerol. Its function is as follows. Catalyzes the reversible phosphatidyl group transfer from one phosphatidylglycerol molecule to another to form cardiolipin (CL) (diphosphatidylglycerol) and glycerol. In Oceanobacillus iheyensis (strain DSM 14371 / CIP 107618 / JCM 11309 / KCTC 3954 / HTE831), this protein is Cardiolipin synthase (cls).